A 204-amino-acid chain; its full sequence is Photosynthetic NDH subunit of subcomplex B 3, chloroplastic (204 aa).

Disordered stretches follow at residues 1 to 24 and 45 to 68; these read MGSVQLSGSGLVASLPPNHSFSHK and KTVRAISTAPASQPPAADEPDEPP. The N-terminal 48 residues, 1-48, are a transit peptide targeting the chloroplast; it reads MGSVQLSGSGLVASLPPNHSFSHKTKLNKPNSYFFRSKHNAARTKTVR. The 2Fe-2S ferredoxin-type domain maps to 76–180; the sequence is HSVLLPDGTP…STGLVVIQQL (105 aa). The [2Fe-2S] cluster site is built by Cys120, Cys126, Cys129, and Cys162.

In terms of assembly, part of the chloroplast NDH complex, composed of a mixture of chloroplast and nucleus encoded subunits. Component of the NDH subcomplex B, at least composed of PnsB1, PnsB2, PnsB3, PnsB4 and PnsB5.

Its subcellular location is the plastid. The protein resides in the chloroplast thylakoid membrane. In terms of biological role, NDH shuttles electrons from NAD(P)H:plastoquinone, via FMN and iron-sulfur (Fe-S) centers, to quinones in the photosynthetic chain and possibly in a chloroplast respiratory chain. The immediate electron acceptor for the enzyme in this species is believed to be plastoquinone. Couples the redox reaction to proton translocation, and thus conserves the redox energy in a proton gradient. The sequence is that of Photosynthetic NDH subunit of subcomplex B 3, chloroplastic from Arabidopsis thaliana (Mouse-ear cress).